A 260-amino-acid polypeptide reads, in one-letter code: NAD-capped RNA hydrolase NudC (260 aa).

Residue Arg-74 participates in substrate binding. 4 residues coordinate Zn(2+): Cys-103, Cys-106, Cys-121, and Cys-124. Residue Tyr-129 participates in substrate binding. The region spanning 130 to 253 is the Nudix hydrolase domain; it reads PRIFPCIIVA…TIARALIEQT (124 aa). Residues Ala-163, Glu-179, and Glu-183 each coordinate a divalent metal cation. A Nudix box motif is present at residues 164-185; that stretch reads GFLEAGETLEDCVAREVHEETG. Substrate is bound at residue 197-204; it reads QPWAFPSS. Glu-224 is a binding site for a divalent metal cation. Residue Ala-246 participates in substrate binding.

Belongs to the Nudix hydrolase family. NudC subfamily. In terms of assembly, homodimer. Requires Mg(2+) as cofactor. It depends on Mn(2+) as a cofactor. The cofactor is Zn(2+).

The enzyme catalyses a 5'-end NAD(+)-phospho-ribonucleoside in mRNA + H2O = a 5'-end phospho-adenosine-phospho-ribonucleoside in mRNA + beta-nicotinamide D-ribonucleotide + 2 H(+). The catalysed reaction is NAD(+) + H2O = beta-nicotinamide D-ribonucleotide + AMP + 2 H(+). It catalyses the reaction NADH + H2O = reduced beta-nicotinamide D-ribonucleotide + AMP + 2 H(+). MRNA decapping enzyme that specifically removes the nicotinamide adenine dinucleotide (NAD) cap from a subset of mRNAs by hydrolyzing the diphosphate linkage to produce nicotinamide mononucleotide (NMN) and 5' monophosphate mRNA. The NAD-cap is present at the 5'-end of some mRNAs and stabilizes RNA against 5'-processing. Has preference for mRNAs with a 5'-end purine. Catalyzes the hydrolysis of a broad range of dinucleotide pyrophosphates. The sequence is that of NAD-capped RNA hydrolase NudC from Vibrio parahaemolyticus serotype O3:K6 (strain RIMD 2210633).